We begin with the raw amino-acid sequence, 165 residues long: Chemotaxis protein CheW (165 aa).

Belongs to the CheW family.

Its function is as follows. Plays an essential role in chemotaxis signal transduction system in order to colonize the host stomach. This Helicobacter pylori (strain ATCC 700392 / 26695) (Campylobacter pylori) protein is Chemotaxis protein CheW.